Consider the following 137-residue polypeptide: MLLPKRTKYRKPHKVSFKGKAKGAKTINFGEYGLMSLDGAWIDNRQIEAARIAMTRYMRRDGKVWMRIFPHISMSKKPAEVRMGSGKGNPEKWVAVVKEGTVMFEIAGVSEETAREALRLAMHKLPVRCKFVKRGEE.

This sequence belongs to the universal ribosomal protein uL16 family. Part of the 50S ribosomal subunit.

Its function is as follows. Binds 23S rRNA and is also seen to make contacts with the A and possibly P site tRNAs. This is Large ribosomal subunit protein uL16 from Mesoplasma florum (strain ATCC 33453 / NBRC 100688 / NCTC 11704 / L1) (Acholeplasma florum).